The following is a 264-amino-acid chain: Large ribosomal subunit protein uL2 (264 aa).

This sequence belongs to the universal ribosomal protein uL2 family.

It is found in the cytoplasm. This chain is Large ribosomal subunit protein uL2 (RPL8), found in Tetrahymena thermophila (strain SB210).